The following is a 275-amino-acid chain: Voltage-dependent calcium channel gamma-7 subunit (275 aa).

A run of 4 helical transmembrane segments spans residues 8–28, 103–123, 129–149, and 179–199; these read ALTLLSSVFGACGLLLVGIAV, FPMVSLFLVFTAFVISNIGHI, ILAFVSGIFFILSGLSLVVGL, and FAFAASSFLLKEGAGVMSVYL. Ser-222, Ser-225, and Ser-273 each carry phosphoserine.

It belongs to the PMP-22/EMP/MP20 family. CACNG subfamily. As to quaternary structure, interacts with CACNA1C. Identified in a complex with the L-type calcium channel subunits CACNA1C, CACNA2D1 and either CACNB1 or CACNB2. Acts as an auxiliary subunit for AMPA-selective glutamate receptors (AMPARs), such as GRIA1 and GRIA2. Detected in heart left ventricle. Widely expressed.

The protein localises to the cell membrane. Regulates the activity of L-type calcium channels that contain CACNA1C as pore-forming subunit. Regulates the trafficking and gating properties of AMPA-selective glutamate receptors (AMPARs). Promotes their targeting to the cell membrane and synapses and modulates their gating properties by slowing their rates of activation, deactivation and desensitization and by mediating their resensitization. Displays subunit-specific AMPA receptor regulation. Shows specificity only for GRIA1 and GRIA2. The polypeptide is Voltage-dependent calcium channel gamma-7 subunit (CACNG7) (Homo sapiens (Human)).